A 101-amino-acid polypeptide reads, in one-letter code: Large ribosomal subunit protein P1 (101 aa).

The segment covering 61-72 has biased composition (low complexity); it reads AAPAAAAAPAAA. A disordered region spans residues 61–101; sequence AAPAAAAAPAAAEEAEEEAEEEEEEEEAEEEAAAGLGALFG. Over residues 73-92 the composition is skewed to acidic residues; sequence EEAEEEAEEEEEEEEAEEEA.

Belongs to the eukaryotic ribosomal protein P1/P2 family. Part of the 50S ribosomal subunit. Homodimer, it forms part of the ribosomal stalk which helps the ribosome interact with GTP-bound translation factors. Forms a heptameric uL10/P0(P1)2(P1)2(P1)2 complex, where uL10/P0 forms an elongated spine to which the P1 dimers bind in a sequential fashion.

Functionally, forms part of the ribosomal stalk, playing a central role in the interaction of the ribosome with GTP-bound translation factors. This chain is Large ribosomal subunit protein P1, found in Methanothermobacter thermautotrophicus (strain ATCC 29096 / DSM 1053 / JCM 10044 / NBRC 100330 / Delta H) (Methanobacterium thermoautotrophicum).